Reading from the N-terminus, the 310-residue chain is Protein N-terminal asparagine amidohydrolase (310 aa).

In terms of assembly, monomer.

It is found in the cytoplasm. The enzyme catalyses N-terminal L-asparaginyl-[protein] + H2O + H(+) = N-terminal L-aspartyl-[protein] + NH4(+). With respect to regulation, inhibited by micromolar concentrations of copper and zinc ions. In terms of biological role, N-terminal asparagine deamidase that mediates deamidation of N-terminal asparagine residues to aspartate. Required for the ubiquitin-dependent turnover of intracellular proteins that initiate with Met-Asn. These proteins are acetylated on the retained initiator methionine and can subsequently be modified by the removal of N-acetyl methionine by acylaminoacid hydrolase (AAH). Conversion of the resulting N-terminal asparagine to aspartate by NTAN1/PNAD renders the protein susceptible to arginylation, polyubiquitination and degradation as specified by the N-end rule. This enzyme does not act on substrates with internal or C-terminal asparagines and does not act on glutamine residues in any position, nor on acetylated N-terminal peptidyl Asn. This is Protein N-terminal asparagine amidohydrolase (NTAN1) from Homo sapiens (Human).